We begin with the raw amino-acid sequence, 328 residues long: GTP cyclohydrolase MptA (328 aa).

It belongs to the GTP cyclohydrolase IV family. Homodimer. It depends on Fe(2+) as a cofactor.

The catalysed reaction is GTP + H2O = 7,8-dihydroneopterin 2',3'-cyclic phosphate + formate + diphosphate + H(+). The protein operates within cofactor biosynthesis; 5,6,7,8-tetrahydromethanopterin biosynthesis. Functionally, converts GTP to 7,8-dihydro-D-neopterin 2',3'-cyclic phosphate, the first intermediate in the biosynthesis of coenzyme methanopterin. The protein is GTP cyclohydrolase MptA of Methanospirillum hungatei JF-1 (strain ATCC 27890 / DSM 864 / NBRC 100397 / JF-1).